Consider the following 311-residue polypeptide: Heme A synthase (311 aa).

The Cytoplasmic portion of the chain corresponds to 1–6; sequence MQRFIK. A helical membrane pass occupies residues 7-27; the sequence is WLAVITSLDLLIVLLGGALVT. The Extracellular portion of the chain corresponds to 28–62; that stretch reads KTGSGQGCGKSWPLCNGEFVPSNLSMETIIELSHR. Cys-35 and Cys-42 are oxidised to a cystine. Glu-58 is a catalytic residue. His-61 provides a ligand contact to heme o. The chain crosses the membrane as a helical span at residues 63-83; the sequence is LTSGSAGILVTLLCILSWKYY. The Cytoplasmic portion of the chain corresponds to 84–91; sequence KHVRETKT. The chain crosses the membrane as a helical span at residues 92–112; it reads LAILSFVFLVAQALMGAAAVV. Over 113–121 the chain is Extracellular; that stretch reads WGQMPAVLA. The chain crosses the membrane as a helical span at residues 122 to 142; the sequence is IHFGISLISFASVILLTCLIF. His-123 provides a ligand contact to heme o. The Cytoplasmic segment spans residues 143–159; the sequence is EIDQKFDARSLIMDKKM. Residues 160–180 form a helical membrane-spanning segment; sequence KFHIYGVTIYCYLVVYTGALV. The Extracellular segment spans residues 181–211; it reads RHERASLACPDFPLCSKNRPMPTQLHEWVQM. Cys-189 and Cys-195 are oxidised to a cystine. Residues 212 to 232 traverse the membrane as a helical segment; sequence GHRLAAMLIFVWILYAMILAI. Residue His-213 coordinates heme b. At 233–243 the chain is on the cytoplasmic side; sequence RHYKQQPVVYW. A helical membrane pass occupies residues 244–264; that stretch reads GWIISFILVTLQAIVGILVVF. Residues 265–271 are Extracellular-facing; that stretch reads TNASLAM. Residues 272 to 292 form a helical membrane-spanning segment; sequence ALLHSLFISCLFAVLCYLVML. His-275 provides a ligand contact to heme b. Over 293 to 311 the chain is Cytoplasmic; that stretch reads GTRSKVNAKEAASTSKQTK.

It belongs to the COX15/CtaA family. Type 1 subfamily. As to quaternary structure, interacts with CtaB. Heme b is required as a cofactor.

It is found in the cell membrane. It carries out the reaction Fe(II)-heme o + 2 A + H2O = Fe(II)-heme a + 2 AH2. The protein operates within porphyrin-containing compound metabolism; heme A biosynthesis; heme A from heme O: step 1/1. Catalyzes the conversion of heme O to heme A by two successive hydroxylations of the methyl group at C8. The first hydroxylation forms heme I, the second hydroxylation results in an unstable dihydroxymethyl group, which spontaneously dehydrates, resulting in the formyl group of heme A. This Bacillus cereus (strain 03BB102) protein is Heme A synthase.